A 399-amino-acid chain; its full sequence is Tryptophan synthase beta chain (399 aa).

Lys-90 carries the N6-(pyridoxal phosphate)lysine modification.

The protein belongs to the TrpB family. As to quaternary structure, tetramer of two alpha and two beta chains. Pyridoxal 5'-phosphate is required as a cofactor.

The catalysed reaction is (1S,2R)-1-C-(indol-3-yl)glycerol 3-phosphate + L-serine = D-glyceraldehyde 3-phosphate + L-tryptophan + H2O. The protein operates within amino-acid biosynthesis; L-tryptophan biosynthesis; L-tryptophan from chorismate: step 5/5. The beta subunit is responsible for the synthesis of L-tryptophan from indole and L-serine. The chain is Tryptophan synthase beta chain from Lactiplantibacillus plantarum (strain ATCC BAA-793 / NCIMB 8826 / WCFS1) (Lactobacillus plantarum).